The primary structure comprises 906 residues: Translation initiation factor IF-2 (906 aa).

Disordered stretches follow at residues 94-125, 165-232, and 270-321; these read APEKTEVIPEETENTVEESTAAETVESEPETA, ESEA…TGKK, and RQEQ…SSEV. Composition is skewed to basic and acidic residues over residues 165–176, 222–232, and 270–284; these read ESEAEKGTEIEK, GPAEARETGKK, and RQEQKRREEAKKREA. Basic residues predominate over residues 299–313; it reads QQRRSLKRGGKRKKY. A tr-type G domain is found at 405–574; that stretch reads ERPPVITIMG…LLQAEMMELK (170 aa). Residues 414-421 form a G1 region; sequence GHVDHGKT. 414–421 contacts GTP; sequence GHVDHGKT. Positions 439 to 443 are G2; the sequence is GITQH. The interval 460–463 is G3; that stretch reads DTPG. GTP contacts are provided by residues 460–464 and 514–517; these read DTPGH and NKMD. Residues 514–517 form a G4 region; it reads NKMD. The G5 stretch occupies residues 550–552; it reads SAH.

This sequence belongs to the TRAFAC class translation factor GTPase superfamily. Classic translation factor GTPase family. IF-2 subfamily.

It localises to the cytoplasm. In terms of biological role, one of the essential components for the initiation of protein synthesis. Protects formylmethionyl-tRNA from spontaneous hydrolysis and promotes its binding to the 30S ribosomal subunits. Also involved in the hydrolysis of GTP during the formation of the 70S ribosomal complex. The protein is Translation initiation factor IF-2 of Sulfurovum sp. (strain NBC37-1).